Consider the following 304-residue polypeptide: Acetyl-coenzyme A carboxylase carboxyl transferase subunit beta (304 aa).

A CoA carboxyltransferase N-terminal domain is found at 23–292; the sequence is VWTKCDSCGQ…PNPEAPREGV (270 aa). 4 residues coordinate Zn(2+): cysteine 27, cysteine 30, cysteine 46, and cysteine 49. The segment at 27–49 adopts a C4-type zinc-finger fold; that stretch reads CDSCGQVLYRAELERNLEVCPKC. The tract at residues 285–304 is disordered; that stretch reads PEAPREGVVVPPVPDQEPEA. Positions 295–304 are enriched in pro residues; sequence PPVPDQEPEA.

Belongs to the AccD/PCCB family. In terms of assembly, acetyl-CoA carboxylase is a heterohexamer composed of biotin carboxyl carrier protein (AccB), biotin carboxylase (AccC) and two subunits each of ACCase subunit alpha (AccA) and ACCase subunit beta (AccD). Zn(2+) is required as a cofactor.

The protein localises to the cytoplasm. The catalysed reaction is N(6)-carboxybiotinyl-L-lysyl-[protein] + acetyl-CoA = N(6)-biotinyl-L-lysyl-[protein] + malonyl-CoA. The protein operates within lipid metabolism; malonyl-CoA biosynthesis; malonyl-CoA from acetyl-CoA: step 1/1. Functionally, component of the acetyl coenzyme A carboxylase (ACC) complex. Biotin carboxylase (BC) catalyzes the carboxylation of biotin on its carrier protein (BCCP) and then the CO(2) group is transferred by the transcarboxylase to acetyl-CoA to form malonyl-CoA. The protein is Acetyl-coenzyme A carboxylase carboxyl transferase subunit beta of Shigella sonnei (strain Ss046).